The chain runs to 170 residues: Small ribosomal subunit protein uS9 (170 aa).

A disordered region spans residues 1–47; it reads MAETTPEQPLEEIDIDSYTTESEVPVEGEYTSESMASAFGEPQPAAG.

This sequence belongs to the universal ribosomal protein uS9 family.

The protein is Small ribosomal subunit protein uS9 (rpsI) of Streptomyces coelicolor (strain ATCC BAA-471 / A3(2) / M145).